Here is a 190-residue protein sequence, read N- to C-terminus: UPF0301 protein Reut_A0705 (190 aa).

The protein belongs to the UPF0301 (AlgH) family.

The protein is UPF0301 protein Reut_A0705 of Cupriavidus pinatubonensis (strain JMP 134 / LMG 1197) (Cupriavidus necator (strain JMP 134)).